The sequence spans 317 residues: MDARADQIYNPYRVFTRAQWAKLRDDTPMTLNATEIAALRSMYDRLDLKEVEEIYLPLSRLLSIYVAATQQLYFAQRRFLGIVDRKMPYIIGVAGSVAVGKSTTARVLQALLARWSPRPKVDLITTDGFLYSNAMLERQGMMQKKGFPESYDLPRLLAFLSDIKAGRRRVRAPIYSHLTYDIVPNEYVTVDRPDILIVEGVNVLQTGRLPRDGKAVPVVSDFFDFSVYIDADEPVLREWYVQRFLALRDTAFHDPRSYFHRYAPLSDEEATATALAIWERTNLANLEDNILPTRPRATLIMKKGTDHVVETVALRRL.

ATP is bound at residue 95 to 102 (GSVAVGKS).

Belongs to the prokaryotic pantothenate kinase family.

It localises to the cytoplasm. It catalyses the reaction (R)-pantothenate + ATP = (R)-4'-phosphopantothenate + ADP + H(+). The protein operates within cofactor biosynthesis; coenzyme A biosynthesis; CoA from (R)-pantothenate: step 1/5. This chain is Pantothenate kinase, found in Rhodopseudomonas palustris (strain BisB18).